We begin with the raw amino-acid sequence, 384 residues long: Deoxyguanosinetriphosphate triphosphohydrolase-like protein (384 aa).

The region spanning 63–199 (RLTHSLEVAT…ASLADDISYI (137 aa)) is the HD domain.

The protein belongs to the dGTPase family. Type 2 subfamily.

The chain is Deoxyguanosinetriphosphate triphosphohydrolase-like protein from Rickettsia typhi (strain ATCC VR-144 / Wilmington).